The sequence spans 250 residues: 5'/3'-nucleotidase SurE (250 aa).

Positions 8, 9, 39, and 92 each coordinate a divalent metal cation.

This sequence belongs to the SurE nucleotidase family. A divalent metal cation serves as cofactor.

It is found in the cytoplasm. The catalysed reaction is a ribonucleoside 5'-phosphate + H2O = a ribonucleoside + phosphate. The enzyme catalyses a ribonucleoside 3'-phosphate + H2O = a ribonucleoside + phosphate. It carries out the reaction [phosphate](n) + H2O = [phosphate](n-1) + phosphate + H(+). Nucleotidase with a broad substrate specificity as it can dephosphorylate various ribo- and deoxyribonucleoside 5'-monophosphates and ribonucleoside 3'-monophosphates with highest affinity to 3'-AMP. Also hydrolyzes polyphosphate (exopolyphosphatase activity) with the preference for short-chain-length substrates (P20-25). Might be involved in the regulation of dNTP and NTP pools, and in the turnover of 3'-mononucleotides produced by numerous intracellular RNases (T1, T2, and F) during the degradation of various RNAs. The protein is 5'/3'-nucleotidase SurE of Wigglesworthia glossinidia brevipalpis.